The following is a 195-amino-acid chain: Imidazoleglycerol-phosphate dehydratase (195 aa).

This sequence belongs to the imidazoleglycerol-phosphate dehydratase family.

It is found in the cytoplasm. The enzyme catalyses D-erythro-1-(imidazol-4-yl)glycerol 3-phosphate = 3-(imidazol-4-yl)-2-oxopropyl phosphate + H2O. It participates in amino-acid biosynthesis; L-histidine biosynthesis; L-histidine from 5-phospho-alpha-D-ribose 1-diphosphate: step 6/9. In Cereibacter sphaeroides (strain ATCC 17025 / ATH 2.4.3) (Rhodobacter sphaeroides), this protein is Imidazoleglycerol-phosphate dehydratase.